The chain runs to 271 residues: NADH-quinone oxidoreductase subunit B (271 aa).

Residues Cys37, Cys38, Cys103, and Cys132 each contribute to the [4Fe-4S] cluster site. The segment at 227-271 (LAPPSVFGRAKRIPVDPKPSDEARAHGPGPTTESIGDVDGPDRGI) is disordered. The span at 239-251 (IPVDPKPSDEARA) shows a compositional bias: basic and acidic residues.

It belongs to the complex I 20 kDa subunit family. In terms of assembly, NDH-1 is composed of 14 different subunits. Subunits NuoB, C, D, E, F, and G constitute the peripheral sector of the complex. It depends on [4Fe-4S] cluster as a cofactor.

The protein localises to the cell membrane. It catalyses the reaction a quinone + NADH + 5 H(+)(in) = a quinol + NAD(+) + 4 H(+)(out). Functionally, NDH-1 shuttles electrons from NADH, via FMN and iron-sulfur (Fe-S) centers, to quinones in the respiratory chain. The immediate electron acceptor for the enzyme in this species is believed to be a menaquinone. Couples the redox reaction to proton translocation (for every two electrons transferred, four hydrogen ions are translocated across the cytoplasmic membrane), and thus conserves the redox energy in a proton gradient. The polypeptide is NADH-quinone oxidoreductase subunit B (Frankia casuarinae (strain DSM 45818 / CECT 9043 / HFP020203 / CcI3)).